A 768-amino-acid polypeptide reads, in one-letter code: Cullin-3 (768 aa).

The disordered stretch occupies residues 677–698 (VAAKQGESDPERKETRQKVDDD). Residues 682 to 698 (GESDPERKETRQKVDDD) show a composition bias toward basic and acidic residues. Positions 698 to 760 (DRKHEIEAAI…REYLARTPED (63 aa)) constitute a Cullin neddylation domain. A Glycyl lysine isopeptide (Lys-Gly) (interchain with G-Cter in NEDD8) cross-link involves residue K712.

Belongs to the cullin family. Component of multiple BCR (BTB-CUL3-RBX1) E3 ubiquitin-protein ligase complexes formed of cul3, rbx1 and a variable BTB domain-containing protein acting as both, adapter to cullin and substrate recognition subunit. Interacts with btbd6. Post-translationally, neddylated. Attachment of NEDD8 is required for the E3 ubiquitin-protein ligase activity of the SCF-like complex.

Its subcellular location is the nucleus. It participates in protein modification; protein ubiquitination. Its function is as follows. Probable core component of cullin-based SCF-like E3 ubiquitin-protein ligase complexes which mediate the ubiquitination and subsequent proteasomal degradation of target proteins. The E3 ubiquitin-protein ligase activity of the complex is dependent on the neddylation of the cullin subunit. Involved in ER-Golgi transport by regulating the size of COPII coats, thereby playing a key role in collagen export, which is required for embryonic stem (ES) cells division. May play a role in the regulation of mittotic entry via ubiquitination of aurka. In Xenopus tropicalis (Western clawed frog), this protein is Cullin-3 (cul3).